The following is a 315-amino-acid chain: MEPEAGTNRTAVAEFILLGLVQTEEMQPVVFVLFLFAYLVTIGGNLSILAAILVEPKLHAPMYFFLGNLSVLDVGCITVTVPAMLGRLLSHKSTISYDACLSQLFFFHLLAGMDCFLLTAMAYDRFLAICWPLTYSTRMSQTVQRMLVAASWACAFTNALTHTVAMSTLNFCGPNEVNHFYCDLPQLFQLSCSSTQLNELLLFAVGFIMAGTPLVLIITSYSHVAAAVLRIRSVEGWKKAFSTCGSHLTVVCLFFGTGIFNYMRLGSEEASDKDKGVGVFNTVINPMLNPLIYSLRNPDVQGALWRIFLGRRSLT.

Topologically, residues 1–29 (MEPEAGTNRTAVAEFILLGLVQTEEMQPV) are extracellular. An N-linked (GlcNAc...) asparagine glycan is attached at Asn-8. Residues 30 to 52 (VFVLFLFAYLVTIGGNLSILAAI) traverse the membrane as a helical segment. Residues 53 to 60 (LVEPKLHA) are Cytoplasmic-facing. The helical transmembrane segment at 61-82 (PMYFFLGNLSVLDVGCITVTVP) threads the bilayer. Residues 83–103 (AMLGRLLSHKSTISYDACLSQ) are Extracellular-facing. Cysteines 100 and 192 form a disulfide. A helical transmembrane segment spans residues 104–123 (LFFFHLLAGMDCFLLTAMAY). The Cytoplasmic segment spans residues 124 to 143 (DRFLAICWPLTYSTRMSQTV). The helical transmembrane segment at 144–161 (QRMLVAASWACAFTNALT) threads the bilayer. Topologically, residues 162–199 (HTVAMSTLNFCGPNEVNHFYCDLPQLFQLSCSSTQLNE) are extracellular. Residues 200 to 223 (LLLFAVGFIMAGTPLVLIITSYSH) traverse the membrane as a helical segment. Residues 224–240 (VAAAVLRIRSVEGWKKA) lie on the Cytoplasmic side of the membrane. A helical transmembrane segment spans residues 241–264 (FSTCGSHLTVVCLFFGTGIFNYMR). Residues 265–275 (LGSEEASDKDK) are Extracellular-facing. Residues 276–295 (GVGVFNTVINPMLNPLIYSL) form a helical membrane-spanning segment. The Cytoplasmic segment spans residues 296–315 (RNPDVQGALWRIFLGRRSLT).

The protein belongs to the G-protein coupled receptor 1 family.

It localises to the cell membrane. Odorant receptor. The sequence is that of Olfactory receptor 3A2 (OR3A2) from Pan troglodytes (Chimpanzee).